A 127-amino-acid chain; its full sequence is uncharacterized protein (127 aa).

Residues Met1–Gly23 form the signal peptide. Positions Cys43 to Arg127 are disordered. Positions Pro59–Leu70 are enriched in low complexity.

It is found in the secreted. This is an uncharacterized protein from Homo sapiens (Human).